A 226-amino-acid chain; its full sequence is 7-cyano-7-deazaguanine synthase (226 aa).

Position 10–20 (10–20 (LSGGLDSATAA)) interacts with ATP. Zn(2+) contacts are provided by cysteine 191, cysteine 199, cysteine 202, and cysteine 205.

Belongs to the QueC family. Zn(2+) serves as cofactor.

It catalyses the reaction 7-carboxy-7-deazaguanine + NH4(+) + ATP = 7-cyano-7-deazaguanine + ADP + phosphate + H2O + H(+). Its pathway is purine metabolism; 7-cyano-7-deazaguanine biosynthesis. Catalyzes the ATP-dependent conversion of 7-carboxy-7-deazaguanine (CDG) to 7-cyano-7-deazaguanine (preQ(0)). In Synechococcus sp. (strain CC9311), this protein is 7-cyano-7-deazaguanine synthase.